Here is a 375-residue protein sequence, read N- to C-terminus: MQVIVALAALGSLAAPALGFSIPRGVPVSQSMIDVKLSSTGNSMVKATITNNGNRALNLLKFHTIMDSNPTRKVSIESEDGKEIQFTGMMPTYKEKDLKPSYFISLPPKGTVEHSFDIARTHDLSRGGKFTLKAEGMVPIAEENGTEITGAAKYHSNELHMTIDGEKAASVENAFGIVKRGPLTRINKRTSIDMQSCGNSQELQALTAALKASAQLSSMSAQAVSQNQDKYMEYFKDPQYMQTVQSRFQAVAQESSSTTGGGTTYHCSDTMGGCEEGVLAYTLPSQNEVFNCPIYYSDLPPLSNECHAQDQATTTLHELTHNPAVQEPFCEDNGYGYERATALSAEKAVQNADSYALFANGKLNLITLMLIIDPD.

Positions 1–19 (MQVIVALAALGSLAAPALG) are cleaved as a signal peptide. The propeptide occupies 20 to 189 (FSIPRGVPVS…RGPLTRINKR (170 aa)). Cystine bridges form between Cys-197/Cys-267 and Cys-274/Cys-292. His-317 lines the Zn(2+) pocket. The active site involves Glu-318. His-321 and Asp-332 together coordinate Zn(2+).

Belongs to the peptidase M35 family. Zn(2+) is required as a cofactor.

It is found in the secreted. It carries out the reaction Preferential cleavage of bonds with hydrophobic residues in P1'. Also 3-Asn-|-Gln-4 and 8-Gly-|-Ser-9 bonds in insulin B chain.. Its function is as follows. Probable secreted metalloprotease that shows high activities on basic nuclear substrates such as histone and protamine. May be involved in virulence. The polypeptide is Probable neutral protease 2 homolog ARB_05817 (Arthroderma benhamiae (strain ATCC MYA-4681 / CBS 112371) (Trichophyton mentagrophytes)).